The sequence spans 209 residues: Holliday junction branch migration complex subunit RuvA (209 aa).

The tract at residues 1 to 70 (MFSYLKGEAI…EDGTYLYGFA (70 aa)) is domain I. The tract at residues 71–149 (SAAARDLFRQ…QWRDQFSLPD (79 aa)) is domain II. Residues 149 to 153 (DTAAQ) form a flexible linker region. The tract at residues 154-209 (PNAAVHEDLELTLLALGYQETEIRGAIATLSQDSILLQNDNADEWIRRAITLLSQT) is domain III.

Belongs to the RuvA family. In terms of assembly, homotetramer. Forms an RuvA(8)-RuvB(12)-Holliday junction (HJ) complex. HJ DNA is sandwiched between 2 RuvA tetramers; dsDNA enters through RuvA and exits via RuvB. An RuvB hexamer assembles on each DNA strand where it exits the tetramer. Each RuvB hexamer is contacted by two RuvA subunits (via domain III) on 2 adjacent RuvB subunits; this complex drives branch migration. In the full resolvosome a probable DNA-RuvA(4)-RuvB(12)-RuvC(2) complex forms which resolves the HJ.

It is found in the cytoplasm. The RuvA-RuvB-RuvC complex processes Holliday junction (HJ) DNA during genetic recombination and DNA repair, while the RuvA-RuvB complex plays an important role in the rescue of blocked DNA replication forks via replication fork reversal (RFR). RuvA specifically binds to HJ cruciform DNA, conferring on it an open structure. The RuvB hexamer acts as an ATP-dependent pump, pulling dsDNA into and through the RuvAB complex. HJ branch migration allows RuvC to scan DNA until it finds its consensus sequence, where it cleaves and resolves the cruciform DNA. This is Holliday junction branch migration complex subunit RuvA from Picosynechococcus sp. (strain ATCC 27264 / PCC 7002 / PR-6) (Agmenellum quadruplicatum).